A 37-amino-acid chain; its full sequence is Ice-structuring protein 3 (37 aa).

This sequence belongs to the type-I AFP family.

Contributes to protect fish blood from freezing at subzero sea water temperatures. Lowers the blood freezing point. Binds to nascent ice crystals and prevents further growth. The sequence is that of Ice-structuring protein 3 from Pseudopleuronectes americanus (Winter flounder).